We begin with the raw amino-acid sequence, 184 residues long: Bifunctional protein PyrR (184 aa).

The short motif at 99-111 is the PRPP-binding element; the sequence is IVLVDDVLYTGRT.

The protein belongs to the purine/pyrimidine phosphoribosyltransferase family. PyrR subfamily. In terms of assembly, homodimer and homohexamer; in equilibrium.

It carries out the reaction UMP + diphosphate = 5-phospho-alpha-D-ribose 1-diphosphate + uracil. Functionally, regulates transcriptional attenuation of the pyrimidine nucleotide (pyr) operon by binding in a uridine-dependent manner to specific sites on pyr mRNA. This disrupts an antiterminator hairpin in the RNA and favors formation of a downstream transcription terminator, leading to a reduced expression of downstream genes. Its function is as follows. Also displays a weak uracil phosphoribosyltransferase activity which is not physiologically significant. In Acetivibrio thermocellus (strain ATCC 27405 / DSM 1237 / JCM 9322 / NBRC 103400 / NCIMB 10682 / NRRL B-4536 / VPI 7372) (Clostridium thermocellum), this protein is Bifunctional protein PyrR.